Consider the following 227-residue polypeptide: Cytochrome c oxidase subunit 2 (227 aa).

Residues 1-14 (MAYPMQLGFQDATS) lie on the Mitochondrial intermembrane side of the membrane. A helical transmembrane segment spans residues 15–45 (PIMEELLHFHDHTLMIVFLISSLVLYIISLM). At 46 to 59 (LTTKLTHTSTMDAQ) the chain is on the mitochondrial matrix side. The helical transmembrane segment at 60–87 (EVETVWTILPAVILIMIALPSLRILYMM) threads the bilayer. Over 88–227 (DEINNPSLTV…HFEKWSASML (140 aa)) the chain is Mitochondrial intermembrane. 6 residues coordinate Cu cation: histidine 161, cysteine 196, glutamate 198, cysteine 200, histidine 204, and methionine 207. Mg(2+) is bound at residue glutamate 198.

It belongs to the cytochrome c oxidase subunit 2 family. In terms of assembly, component of the cytochrome c oxidase (complex IV, CIV), a multisubunit enzyme composed of 14 subunits. The complex is composed of a catalytic core of 3 subunits MT-CO1, MT-CO2 and MT-CO3, encoded in the mitochondrial DNA, and 11 supernumerary subunits COX4I, COX5A, COX5B, COX6A, COX6B, COX6C, COX7A, COX7B, COX7C, COX8 and NDUFA4, which are encoded in the nuclear genome. The complex exists as a monomer or a dimer and forms supercomplexes (SCs) in the inner mitochondrial membrane with NADH-ubiquinone oxidoreductase (complex I, CI) and ubiquinol-cytochrome c oxidoreductase (cytochrome b-c1 complex, complex III, CIII), resulting in different assemblies (supercomplex SCI(1)III(2)IV(1) and megacomplex MCI(2)III(2)IV(2)). Found in a complex with TMEM177, COA6, COX18, COX20, SCO1 and SCO2. Interacts with TMEM177 in a COX20-dependent manner. Interacts with COX20. Interacts with COX16. The cofactor is Cu cation.

The protein resides in the mitochondrion inner membrane. The enzyme catalyses 4 Fe(II)-[cytochrome c] + O2 + 8 H(+)(in) = 4 Fe(III)-[cytochrome c] + 2 H2O + 4 H(+)(out). In terms of biological role, component of the cytochrome c oxidase, the last enzyme in the mitochondrial electron transport chain which drives oxidative phosphorylation. The respiratory chain contains 3 multisubunit complexes succinate dehydrogenase (complex II, CII), ubiquinol-cytochrome c oxidoreductase (cytochrome b-c1 complex, complex III, CIII) and cytochrome c oxidase (complex IV, CIV), that cooperate to transfer electrons derived from NADH and succinate to molecular oxygen, creating an electrochemical gradient over the inner membrane that drives transmembrane transport and the ATP synthase. Cytochrome c oxidase is the component of the respiratory chain that catalyzes the reduction of oxygen to water. Electrons originating from reduced cytochrome c in the intermembrane space (IMS) are transferred via the dinuclear copper A center (CU(A)) of subunit 2 and heme A of subunit 1 to the active site in subunit 1, a binuclear center (BNC) formed by heme A3 and copper B (CU(B)). The BNC reduces molecular oxygen to 2 water molecules using 4 electrons from cytochrome c in the IMS and 4 protons from the mitochondrial matrix. This Tragelaphus imberbis (Lesser kudu) protein is Cytochrome c oxidase subunit 2 (MT-CO2).